We begin with the raw amino-acid sequence, 103 residues long: MIVTTTSGIQGKEIIDYIDIVNGEAIMGANIVRDLFASVRDVVGGRAGSYESKLKEARDIAMDEMKELAKQKGANAIVGIDVDYEVVRDGMLMVAVSGTAVRI.

This sequence belongs to the UPF0145 family.

The protein is UPF0145 protein BT9727_3206 of Bacillus thuringiensis subsp. konkukian (strain 97-27).